Here is a 162-residue protein sequence, read N- to C-terminus: Caveolin-2 (162 aa).

Topologically, residues 1–86 (MGLETEKADV…FEVSKYVIYK (86 aa)) are cytoplasmic. At Tyr-19 the chain carries Phosphotyrosine; by SRC. Residues Ser-20 and Ser-23 each carry the phosphoserine modification. Tyr-27 is modified (phosphotyrosine; by SRC). Positions 87 to 107 (FLTLFLAIPLAFAAGILFATL) form an intramembrane region, helical. Residues 108–162 (SCLHIWIVMPFVKTCLMVLPSVQTIWKSVTDVVIAPLCASVGRSFSSVSMQLSRD) lie on the Cytoplasmic side of the membrane.

It belongs to the caveolin family. In terms of assembly, monomer or homodimer. Interacts with CAV1; the interaction forms a stable heterooligomeric complex that is required for targeting to lipid rafts and for caveolae formation. Tyrosine phosphorylated forms do not form heterooligomers with the Tyr-19-phosphorylated form existing as a monomer or dimer, and the Tyr-27-form as a monomer only. Interacts (tyrosine phosphorylated form) with the SH2 domain-containing proteins, RASA1, NCK1 and SRC. Interacts (tyrosine phosphorylated form) with INSR, the interaction (Tyr-27-phosphorylated form) is increased on insulin stimulation. Interacts (Tyr-19 phosphorylated form) with MAPK1 (phosphorylated form); the interaction, promoted by insulin, leads to nuclear location and MAPK1 activation. Interacts with STAT3; the interaction is increased on insulin-induced tyrosine phosphorylation leading to STAT activation. In terms of processing, phosphorylated on serine and tyrosine residues. CAV1 promotes phosphorylation on Ser-23 which then targets the complex to the plasma membrane, lipid rafts and caveolae. Phosphorylation on both Tyr-19 and Tyr-27 is required for insulin-induced 'Ser-727' phosphorylation of STAT3 and its activation. Phosphorylation on Tyr-19 is required for insulin-induced phosphorylation of MAPK1 and DNA binding of STAT3. Tyrosine phosphorylation is induced by both EGF and insulin.

The protein resides in the nucleus. The protein localises to the cytoplasm. It localises to the golgi apparatus membrane. Its subcellular location is the cell membrane. It is found in the membrane. The protein resides in the caveola. May act as a scaffolding protein within caveolar membranes. Interacts directly with G-protein alpha subunits and can functionally regulate their activity. Acts as an accessory protein in conjunction with CAV1 in targeting to lipid rafts and driving caveolae formation. Positive regulator of cellular mitogenesis of the MAPK signaling pathway. Required for the insulin-stimulated nuclear translocation and activation of MAPK1 and STAT3, and the subsequent regulation of cell cycle progression. The protein is Caveolin-2 (CAV2) of Rhinolophus ferrumequinum (Greater horseshoe bat).